We begin with the raw amino-acid sequence, 292 residues long: ATP synthase gamma chain (292 aa).

Belongs to the ATPase gamma chain family. As to quaternary structure, F-type ATPases have 2 components, CF(1) - the catalytic core - and CF(0) - the membrane proton channel. CF(1) has five subunits: alpha(3), beta(3), gamma(1), delta(1), epsilon(1). CF(0) has three main subunits: a, b and c.

Its subcellular location is the cell membrane. Produces ATP from ADP in the presence of a proton gradient across the membrane. The gamma chain is believed to be important in regulating ATPase activity and the flow of protons through the CF(0) complex. The protein is ATP synthase gamma chain of Prosthecochloris aestuarii (strain DSM 271 / SK 413).